Here is a 188-residue protein sequence, read N- to C-terminus: dCTP deaminase (188 aa).

Residues 111-116, 135-137, glutamine 156, tyrosine 170, and glutamine 180 each bind dCTP; these read KSTYAR and TLE. Catalysis depends on glutamate 137, which acts as the Proton donor/acceptor.

It belongs to the dCTP deaminase family. Homotrimer.

It carries out the reaction dCTP + H2O + H(+) = dUTP + NH4(+). Its pathway is pyrimidine metabolism; dUMP biosynthesis; dUMP from dCTP (dUTP route): step 1/2. Catalyzes the deamination of dCTP to dUTP. In Methylococcus capsulatus (strain ATCC 33009 / NCIMB 11132 / Bath), this protein is dCTP deaminase.